The sequence spans 833 residues: Leucine--tRNA ligase (833 aa).

Residues 41–52 (PYPSGAGLHVGH) carry the 'HIGH' region motif. A 'KMSKS' region motif is present at residues 610–614 (KMSKS). Lys-613 serves as a coordination point for ATP.

This sequence belongs to the class-I aminoacyl-tRNA synthetase family.

The protein localises to the cytoplasm. It carries out the reaction tRNA(Leu) + L-leucine + ATP = L-leucyl-tRNA(Leu) + AMP + diphosphate. The polypeptide is Leucine--tRNA ligase (Streptococcus equi subsp. zooepidemicus (strain MGCS10565)).